Consider the following 169-residue polypeptide: Peptide deformylase (169 aa).

Positions 91 and 133 each coordinate Fe cation. The active site involves E134. Fe cation is bound at residue H137.

It belongs to the polypeptide deformylase family. Fe(2+) serves as cofactor.

It carries out the reaction N-terminal N-formyl-L-methionyl-[peptide] + H2O = N-terminal L-methionyl-[peptide] + formate. Functionally, removes the formyl group from the N-terminal Met of newly synthesized proteins. Requires at least a dipeptide for an efficient rate of reaction. N-terminal L-methionine is a prerequisite for activity but the enzyme has broad specificity at other positions. This chain is Peptide deformylase, found in Klebsiella pneumoniae (strain 342).